A 515-amino-acid polypeptide reads, in one-letter code: MGEVKIFDTTLRDGEQSPGVSLIPEEKLAIAKQLARMKVDVIEAGFPISSPGDFEAVQIISENIRDVEVAALARSRKKDIDRAWEALRNGGDPRIHVFIATSPIHMKYKLKLSEEQVIEKAVEAVKYASKYTSNIEFSAEDASRSQPVFLYRLFERVINAGAKVINIPDTVGYAIPEEFGKLIRDIKENVSNIDKVDISVHCHNDLGLAVANSLAAVENGANQIEVAVNGIGERAGNTALEEIIMALYTRKDFYNIGINQDTTQIARLSKLVSNLTGMTIQPNKAIVGANAFAHESGIHQDGVIKERTTYEIMDARTIGLKDNKLVLGKHSGRHAFREFIQKLGYDIDDETFEEIFIEFKKLADKKKNITHVEIEALIDNHYHTFDKVYELDYLSVNTGNKVLPTATIKLKKENNIIEKAACSGDGPVDAIFQAINEIVGIDDIKLISYHINAVTEGKDALGEVIVKTKIEDNTYTGHSAMTDITEASALAYLETINKFLTSEQTRQTTSAQEGI.

In terms of domain architecture, Pyruvate carboxyltransferase spans 4 to 264 (VKIFDTTLRD…NIGINQDTTQ (261 aa)). Mn(2+)-binding residues include Asp-13, His-201, His-203, and Asn-237. The tract at residues 390–515 (ELDYLSVNTG…RQTTSAQEGI (126 aa)) is regulatory domain.

It belongs to the alpha-IPM synthase/homocitrate synthase family. LeuA type 1 subfamily. In terms of assembly, homodimer. The cofactor is Mn(2+).

The protein resides in the cytoplasm. It catalyses the reaction 3-methyl-2-oxobutanoate + acetyl-CoA + H2O = (2S)-2-isopropylmalate + CoA + H(+). Its pathway is amino-acid biosynthesis; L-leucine biosynthesis; L-leucine from 3-methyl-2-oxobutanoate: step 1/4. Functionally, catalyzes the condensation of the acetyl group of acetyl-CoA with 3-methyl-2-oxobutanoate (2-ketoisovalerate) to form 3-carboxy-3-hydroxy-4-methylpentanoate (2-isopropylmalate). The polypeptide is 2-isopropylmalate synthase (Halothermothrix orenii (strain H 168 / OCM 544 / DSM 9562)).